Here is a 909-residue protein sequence, read N- to C-terminus: Golgin subfamily A member 6-like protein 2 (909 aa).

The segment covering M1–P11 has biased composition (pro residues). Disordered regions lie at residues M1–Q88, E300–E362, Q381–E408, K425–P494, and E524–L909. Positions M13 to D31 are enriched in basic and acidic residues. Residues N53–A77 show a composition bias toward polar residues. Residues Q78 to Q88 show a composition bias toward basic and acidic residues. Residues H192–M526 are a coiled coil. Basic and acidic residues-rich tracts occupy residues K425 to E478 and E524 to Q542. A compositionally biased stretch (acidic residues) spans A607–M620. Composition is skewed to gly residues over residues G641–A654 and G676–V689. Positions G692 to R719 are enriched in basic residues. Residues A746–G755 are compositionally biased toward low complexity. Residues D757 to G766 show a composition bias toward acidic residues. A compositionally biased stretch (gly residues) spans G791–G871. Positions D872–R892 are enriched in basic and acidic residues.

Belongs to the GOLGA6 family.

This chain is Golgin subfamily A member 6-like protein 2 (GOLGA6L2), found in Homo sapiens (Human).